Consider the following 233-residue polypeptide: Hydroxyacylglutathione hydrolase (233 aa).

Zn(2+) is bound by residues His52, His54, Asp56, His57, His108, Asp125, and His163.

Belongs to the metallo-beta-lactamase superfamily. Glyoxalase II family. As to quaternary structure, monomer. It depends on Zn(2+) as a cofactor.

The catalysed reaction is an S-(2-hydroxyacyl)glutathione + H2O = a 2-hydroxy carboxylate + glutathione + H(+). The protein operates within secondary metabolite metabolism; methylglyoxal degradation; (R)-lactate from methylglyoxal: step 2/2. Thiolesterase that catalyzes the hydrolysis of S-D-lactoyl-glutathione to form glutathione and D-lactic acid. The polypeptide is Hydroxyacylglutathione hydrolase (Histophilus somni (strain 129Pt) (Haemophilus somnus)).